The following is a 271-amino-acid chain: Enolase-phosphatase E1 (271 aa).

Mg(2+)-binding residues include D16 and E18. Substrate contacts are provided by residues 150–151 and K199; that span reads SS. D226 contacts Mg(2+).

The protein belongs to the HAD-like hydrolase superfamily. MasA/MtnC family. In terms of assembly, monomer. Requires Mg(2+) as cofactor.

Its subcellular location is the cytoplasm. It is found in the nucleus. The enzyme catalyses 5-methylsulfanyl-2,3-dioxopentyl phosphate + H2O = 1,2-dihydroxy-5-(methylsulfanyl)pent-1-en-3-one + phosphate. It functions in the pathway amino-acid biosynthesis; L-methionine biosynthesis via salvage pathway; L-methionine from S-methyl-5-thio-alpha-D-ribose 1-phosphate: step 3/6. It participates in amino-acid biosynthesis; L-methionine biosynthesis via salvage pathway; L-methionine from S-methyl-5-thio-alpha-D-ribose 1-phosphate: step 4/6. Bifunctional enzyme that catalyzes the enolization of 2,3-diketo-5-methylthiopentyl-1-phosphate (DK-MTP-1-P) into the intermediate 2-hydroxy-3-keto-5-methylthiopentenyl-1-phosphate (HK-MTPenyl-1-P), which is then dephosphorylated to form the acireductone 1,2-dihydroxy-3-keto-5-methylthiopentene (DHK-MTPene). The protein is Enolase-phosphatase E1 of Candida dubliniensis (strain CD36 / ATCC MYA-646 / CBS 7987 / NCPF 3949 / NRRL Y-17841) (Yeast).